Consider the following 493-residue polypeptide: 3-octaprenyl-4-hydroxybenzoate carboxy-lyase (493 aa).

N172 is a Mn(2+) binding site. Prenylated FMN contacts are provided by residues 175–177 (IYR), 189–191 (RWL), and 194–195 (RG). Residue E238 coordinates Mn(2+). The Proton donor role is filled by D287.

This sequence belongs to the UbiD family. In terms of assembly, homohexamer. Prenylated FMN serves as cofactor. Mn(2+) is required as a cofactor.

The protein resides in the cell membrane. It carries out the reaction a 4-hydroxy-3-(all-trans-polyprenyl)benzoate + H(+) = a 2-(all-trans-polyprenyl)phenol + CO2. The protein operates within cofactor biosynthesis; ubiquinone biosynthesis. Functionally, catalyzes the decarboxylation of 3-octaprenyl-4-hydroxy benzoate to 2-octaprenylphenol, an intermediate step in ubiquinone biosynthesis. The chain is 3-octaprenyl-4-hydroxybenzoate carboxy-lyase from Shewanella frigidimarina (strain NCIMB 400).